We begin with the raw amino-acid sequence, 780 residues long: Reticulon-1 (780 aa).

Disordered stretches follow at residues 1–76 (MAAP…VAME), 128–176 (QKEN…AEST), 201–223 (RPQE…LDFK), and 293–576 (MTAT…IPGP). Residues S13 and S70 each carry the phosphoserine modification. S327 bears the Phosphoserine mark. Residues 328 to 341 (PGSVTPPSSGTEPS) show a composition bias toward low complexity. Residues S350, S352, and S487 each carry the phosphoserine modification. The span at 497-512 (AIREETGSRATEERAP) shows a compositional bias: basic and acidic residues. One can recognise a Reticulon domain in the interval 593–780 (AIDLLYWRDI…KIPGAKRHAE (188 aa)). Helical transmembrane passes span 607-627 (IVFG…VVSV) and 709-729 (FAVL…LTLL).

In terms of assembly, interacts with NDRG1. Interacts with BACE1. Interacts with TMEM33.

The protein localises to the endoplasmic reticulum membrane. It is found in the golgi apparatus membrane. Inhibits amyloid precursor protein processing, probably by blocking BACE1 activity. The sequence is that of Reticulon-1 (Rtn1) from Mus musculus (Mouse).